A 513-amino-acid chain; its full sequence is ATP synthase subunit alpha (513 aa).

Position 169 to 176 (169 to 176 (GDRQTGKT)) interacts with ATP.

This sequence belongs to the ATPase alpha/beta chains family. As to quaternary structure, F-type ATPases have 2 components, CF(1) - the catalytic core - and CF(0) - the membrane proton channel. CF(1) has five subunits: alpha(3), beta(3), gamma(1), delta(1), epsilon(1). CF(0) has three main subunits: a(1), b(2) and c(9-12). The alpha and beta chains form an alternating ring which encloses part of the gamma chain. CF(1) is attached to CF(0) by a central stalk formed by the gamma and epsilon chains, while a peripheral stalk is formed by the delta and b chains.

It is found in the cell inner membrane. It catalyses the reaction ATP + H2O + 4 H(+)(in) = ADP + phosphate + 5 H(+)(out). Functionally, produces ATP from ADP in the presence of a proton gradient across the membrane. The alpha chain is a regulatory subunit. This chain is ATP synthase subunit alpha, found in Shewanella denitrificans (strain OS217 / ATCC BAA-1090 / DSM 15013).